We begin with the raw amino-acid sequence, 153 residues long: Cofilin (153 aa).

The ADF-H domain occupies 15–147; it reads GVAVNDSALQ…AYESVLERVS (133 aa).

The protein belongs to the actin-binding proteins ADF family.

It localises to the cytoplasm. The protein resides in the cytoskeleton. It is found in the nucleus matrix. Controls reversibly actin polymerization and depolymerization in a pH-sensitive manner. It has the ability to bind G- and F-actin in a 1:1 ratio of cofilin to actin. Binding to F-actin is regulated by tropomyosin. It is the major component of intranuclear and cytoplasmic actin rods. Required for accumulation of actin at the cell division site via depolymerizing actin at the cell ends. In association with myosin II has a role in the assembly of the contractile ring via severing actin filaments. Involved in the maintenance of the contractile ring once formed. In association with profilin and capping protein, has a role in the mitotic reorganization of the actin cytoskeleton. The polypeptide is Cofilin (COF1) (Yarrowia lipolytica (strain CLIB 122 / E 150) (Yeast)).